Consider the following 276-residue polypeptide: NAD-capped RNA hydrolase NudC (276 aa).

Arg-82 serves as a coordination point for substrate. Zn(2+)-binding residues include Cys-112 and Cys-115. Residue Glu-125 participates in substrate binding. Cys-130 and Cys-133 together coordinate Zn(2+). Tyr-138 serves as a coordination point for substrate. The 124-residue stretch at 139 to 262 folds into the Nudix hydrolase domain; sequence PRISPSMIVL…SIARYLIDLY (124 aa). Residues Ala-172, Glu-188, and Glu-192 each coordinate a divalent metal cation. A Nudix box motif is present at residues 173 to 194; the sequence is GFAEPGESAEECLVREVREEVA. Residue 206-213 participates in substrate binding; that stretch reads QCWPFPHS. Glu-233 is a binding site for a divalent metal cation. Position 255 (Ala-255) interacts with substrate.

It belongs to the Nudix hydrolase family. NudC subfamily. As to quaternary structure, homodimer. Mg(2+) is required as a cofactor. Mn(2+) serves as cofactor. It depends on Zn(2+) as a cofactor.

The catalysed reaction is a 5'-end NAD(+)-phospho-ribonucleoside in mRNA + H2O = a 5'-end phospho-adenosine-phospho-ribonucleoside in mRNA + beta-nicotinamide D-ribonucleotide + 2 H(+). It carries out the reaction NAD(+) + H2O = beta-nicotinamide D-ribonucleotide + AMP + 2 H(+). It catalyses the reaction NADH + H2O = reduced beta-nicotinamide D-ribonucleotide + AMP + 2 H(+). Its function is as follows. mRNA decapping enzyme that specifically removes the nicotinamide adenine dinucleotide (NAD) cap from a subset of mRNAs by hydrolyzing the diphosphate linkage to produce nicotinamide mononucleotide (NMN) and 5' monophosphate mRNA. The NAD-cap is present at the 5'-end of some mRNAs and stabilizes RNA against 5'-processing. Has preference for mRNAs with a 5'-end purine. Catalyzes the hydrolysis of a broad range of dinucleotide pyrophosphates. In Pseudomonas entomophila (strain L48), this protein is NAD-capped RNA hydrolase NudC.